Here is a 118-residue protein sequence, read N- to C-terminus: Large ribosomal subunit protein bL20 (118 aa).

Belongs to the bacterial ribosomal protein bL20 family.

Binds directly to 23S ribosomal RNA and is necessary for the in vitro assembly process of the 50S ribosomal subunit. It is not involved in the protein synthesizing functions of that subunit. The polypeptide is Large ribosomal subunit protein bL20 (Sulfurimonas denitrificans (strain ATCC 33889 / DSM 1251) (Thiomicrospira denitrificans (strain ATCC 33889 / DSM 1251))).